We begin with the raw amino-acid sequence, 95 residues long: MNPKHWGRAVWTIIFIVLSQAGLDGNIEACKRKLYTIVSTLPCPACRRHATIAIEDNNVMSSDDLNYIYYFFIRLFNNLASDPKYAIDVSKVKPL.

The Intravirion portion of the chain corresponds to 1–8 (MNPKHWGR). The region spanning 1–95 (MNPKHWGRAV…AIDVSKVKPL (95 aa)) is the ERV/ALR sulfhydryl oxidase domain. Residues 9–25 (AVWTIIFIVLSQAGLDG) form a helical membrane-spanning segment. The Virion surface portion of the chain corresponds to 26 to 95 (NIEACKRKLY…AIDVSKVKPL (70 aa)). C43 and C46 are joined by a disulfide.

It belongs to the orthopoxvirus OPG072 family. Interacts with OPG128; this interaction involves formation of a transient disulfide-bonded intermediate, allowing disulfide bond transfer. The cofactor is FAD.

It localises to the virion membrane. Its subcellular location is the host cytoplasm. It catalyses the reaction 2 R'C(R)SH + O2 = R'C(R)S-S(R)CR' + H2O2. Its function is as follows. FAD-dependent sulfhydryl oxidase that catalyzes disulfide bond formation. The complete pathway for formation of disulfide bonds in intracellular virion membrane proteins sequentially involves thiol-disulfide transfer between OPG072, OPG128 and OPG088. The sequence is that of Probable FAD-linked sulfhydryl oxidase OPG072 (OPG072) from Vaccinia virus (strain Copenhagen) (VACV).